A 598-amino-acid chain; its full sequence is Proline--tRNA ligase (598 aa).

The protein belongs to the class-II aminoacyl-tRNA synthetase family. ProS type 1 subfamily. As to quaternary structure, homodimer.

Its subcellular location is the cytoplasm. It catalyses the reaction tRNA(Pro) + L-proline + ATP = L-prolyl-tRNA(Pro) + AMP + diphosphate. Catalyzes the attachment of proline to tRNA(Pro) in a two-step reaction: proline is first activated by ATP to form Pro-AMP and then transferred to the acceptor end of tRNA(Pro). As ProRS can inadvertently accommodate and process non-cognate amino acids such as alanine and cysteine, to avoid such errors it has two additional distinct editing activities against alanine. One activity is designated as 'pretransfer' editing and involves the tRNA(Pro)-independent hydrolysis of activated Ala-AMP. The other activity is designated 'posttransfer' editing and involves deacylation of mischarged Ala-tRNA(Pro). The misacylated Cys-tRNA(Pro) is not edited by ProRS. The chain is Proline--tRNA ligase from Synechococcus sp. (strain CC9311).